Reading from the N-terminus, the 322-residue chain is Sideroflexin-1 (322 aa).

Serine 2 carries the post-translational modification N-acetylserine. The Mitochondrial matrix segment spans residues 2 to 102; sequence SGELPPNINI…MSAQVPMNMT (101 aa). Residues 103-120 traverse the membrane as a helical segment; the sequence is ITGCMMTFYRTTPAVLFW. Residues 121-146 are Mitochondrial intermembrane-facing; that stretch reads QWINQSFNAVVNYTNRSGDAPLTVNE. The chain crosses the membrane as a helical span at residues 147 to 167; that stretch reads LGTAYVSATTGAVATALGLNA. At 168–174 the chain is on the mitochondrial matrix side; sequence LTKHVSP. A helical transmembrane segment spans residues 175 to 195; that stretch reads LIGRFVPFAAVAAANCINIPL. Residues 196 to 228 lie on the Mitochondrial intermembrane side of the membrane; it reads MRQRELRAGIPVTDENGNRLGESANAAKQAITQ. The chain crosses the membrane as a helical span at residues 229–249; that stretch reads VVISRILMAAPGMAIPPFIMN. Residues 250–266 are Mitochondrial matrix-facing; that stretch reads TLEKKAFLKRFPWMSAP. Residues 267-287 traverse the membrane as a helical segment; sequence IQVGLVGFCLVFATPLCCALF. At 288–322 the chain is on the mitochondrial intermembrane side; the sequence is PQKSSMSVTSLEAELQAKIRETSPELRRVYFNKGL.

Belongs to the sideroflexin family.

It is found in the mitochondrion inner membrane. The enzyme catalyses L-serine(in) = L-serine(out). The catalysed reaction is L-alanine(in) = L-alanine(out). It catalyses the reaction L-cysteine(in) = L-cysteine(out). In terms of biological role, amino acid transporter importing serine, an essential substrate of the mitochondrial branch of the one-carbon pathway, into mitochondria. Mitochondrial serine is then converted to glycine and formate, which exits to the cytosol where it is used to generate the charged folates that serve as one-carbon donors. May also transport other amino acids including alanine and cysteine. The protein is Sideroflexin-1 (SFXN1) of Sus scrofa (Pig).